Reading from the N-terminus, the 257-residue chain is Zinc import ATP-binding protein ZnuC (257 aa).

In terms of domain architecture, ABC transporter spans 5-220 (ITLKNVAVNF…PEFIAMFGHH (216 aa)). Residue 37–44 (GPNGAGKS) coordinates ATP.

Belongs to the ABC transporter superfamily. Zinc importer (TC 3.A.1.15.5) family. As to quaternary structure, the complex is composed of two ATP-binding proteins (ZnuC), two transmembrane proteins (ZnuB) and a solute-binding protein (ZnuA).

It localises to the cell inner membrane. The enzyme catalyses Zn(2+)(out) + ATP(in) + H2O(in) = Zn(2+)(in) + ADP(in) + phosphate(in) + H(+)(in). Functionally, part of the ABC transporter complex ZnuABC involved in zinc import. Responsible for energy coupling to the transport system. The sequence is that of Zinc import ATP-binding protein ZnuC from Photorhabdus laumondii subsp. laumondii (strain DSM 15139 / CIP 105565 / TT01) (Photorhabdus luminescens subsp. laumondii).